The chain runs to 401 residues: tRNA N6-adenosine threonylcarbamoyltransferase (401 aa).

Fe cation-binding residues include His111 and His115. Substrate contacts are provided by residues 191–195 (LASGG), Asp223, Gly236, and Asn336. Position 364 (Asp364) interacts with Fe cation.

It belongs to the KAE1 / TsaD family. Fe(2+) serves as cofactor.

Its subcellular location is the cytoplasm. It carries out the reaction L-threonylcarbamoyladenylate + adenosine(37) in tRNA = N(6)-L-threonylcarbamoyladenosine(37) in tRNA + AMP + H(+). Required for the formation of a threonylcarbamoyl group on adenosine at position 37 (t(6)A37) in tRNAs that read codons beginning with adenine. Is involved in the transfer of the threonylcarbamoyl moiety of threonylcarbamoyl-AMP (TC-AMP) to the N6 group of A37, together with TsaE and TsaB. TsaD likely plays a direct catalytic role in this reaction. This chain is tRNA N6-adenosine threonylcarbamoyltransferase, found in Tropheryma whipplei (strain TW08/27) (Whipple's bacillus).